The following is a 495-amino-acid chain: Ankyrin repeat domain-containing protein 34A (495 aa).

4 ANK repeats span residues threonine 4 to glutamate 33, glutamine 37 to isoleucine 72, leucine 76 to valine 106, and alanine 110 to threonine 139. Residue glutamine 15 is modified to N5-methylglutamine. Polar residues-rich tracts occupy residues aspartate 147 to serine 162 and valine 180 to threonine 191. A disordered region spans residues aspartate 147–arginine 495. Basic and acidic residues predominate over residues alanine 203–phenylalanine 213. The segment covering aspartate 223 to lysine 232 has biased composition (pro residues). Positions proline 233 to lysine 242 are enriched in basic residues. Threonine 315 carries the post-translational modification Phosphothreonine. Over residues serine 375–serine 385 the composition is skewed to polar residues. Basic residues predominate over residues arginine 462–serine 472. Gly residues predominate over residues glutamine 485–arginine 495.

This sequence belongs to the ANKRD34 family. Methylated at Gln-15 by N6AMT1.

The chain is Ankyrin repeat domain-containing protein 34A (Ankrd34a) from Rattus norvegicus (Rat).